A 131-amino-acid polypeptide reads, in one-letter code: Large ribosomal subunit protein eL32 (131 aa).

The protein belongs to the eukaryotic ribosomal protein eL32 family. Component of the large ribosomal subunit. Mature ribosomes consist of a small (40S) and a large (60S) subunit. The 40S subunit contains about 32 different proteins and 1 molecule of RNA (18S). The 60S subunit contains 45 different proteins and 3 molecules of RNA (25S, 5.8S and 5S).

The protein localises to the cytoplasm. In terms of biological role, component of the ribosome, a large ribonucleoprotein complex responsible for the synthesis of proteins in the cell. The small ribosomal subunit (SSU) binds messenger RNAs (mRNAs) and translates the encoded message by selecting cognate aminoacyl-transfer RNA (tRNA) molecules. The large subunit (LSU) contains the ribosomal catalytic site termed the peptidyl transferase center (PTC), which catalyzes the formation of peptide bonds, thereby polymerizing the amino acids delivered by tRNAs into a polypeptide chain. The nascent polypeptides leave the ribosome through a tunnel in the LSU and interact with protein factors that function in enzymatic processing, targeting, and the membrane insertion of nascent chains at the exit of the ribosomal tunnel. In Candida albicans (strain SC5314 / ATCC MYA-2876) (Yeast), this protein is Large ribosomal subunit protein eL32.